Reading from the N-terminus, the 121-residue chain is Neuromedin-B (121 aa).

The signal sequence occupies residues 1–24; sequence MTRQAGSSWLLRGLLLFALFASGV. Methionine 56 bears the Methionine amide mark. A propeptide spanning residues 60–121 is cleaved from the precursor; it reads SLEPPSLSLV…RRLLEPLLQK (62 aa).

Belongs to the bombesin/neuromedin-B/ranatensin family. As to expression, in the hindbrain, expressed in the medulla surrounding the lateral half of the facial nucleus. Also expressed in the olfactory bulb and hippocampus. Detected in a subset of neurons distributed throughout the retrotrapezoid nucleus/parafacial respiratory group (RTN/pFRG). Within the RTN/pFRG, expressed in neuronal subpopulations distinct from those expressing Grp. Expressed in lung.

The protein localises to the secreted. It is found in the cell projection. It localises to the neuron projection. Stimulates smooth muscle contraction. Induces sighing by acting directly on the pre-Botzinger complex, a cluster of several thousand neurons in the ventrolateral medulla responsible for inspiration during respiratory activity. Contributes to the induction of sneezing following exposure to chemical irritants or allergens which causes release of NMB by nasal sensory neurons and activation of NMBR-expressing neurons in the sneeze-evoking region of the brainstem. These in turn activate neurons of the caudal ventral respiratory group, giving rise to the sneeze reflex. Contributes to induction of acute itch, possibly through activation of the NMBR receptor on dorsal root ganglion neurons. Increases expression of NMBR and steroidogenic mediators STAR, CYP11A1 and HSD3B1 in Leydig cells, induces secretion of testosterone by Leydig cells and also promotes Leydig cell proliferation. Plays a role in the innate immune response to influenza A virus infection by enhancing interferon alpha expression and reducing expression of IL6. Plays a role in CSF1-induced proliferation of osteoclast precursors by contributing to the positive regulation of the expression of the CSF1 receptor CSF1R. The chain is Neuromedin-B (Nmb) from Mus musculus (Mouse).